A 724-amino-acid chain; its full sequence is 4-alpha-glucanotransferase (724 aa).

This sequence belongs to the disproportionating enzyme family.

It is found in the cytoplasm. The catalysed reaction is Transfers a segment of a (1-&gt;4)-alpha-D-glucan to a new position in an acceptor, which may be glucose or a (1-&gt;4)-alpha-D-glucan.. The protein is 4-alpha-glucanotransferase (malQ) of Mycobacterium bovis (strain ATCC BAA-935 / AF2122/97).